The primary structure comprises 405 residues: Corticosteroid-binding globulin (405 aa).

Positions 1-22 are cleaved as a signal peptide; the sequence is MPLLLYTCLLWLSTSGLWTVQA. Residues asparagine 26, asparagine 31, asparagine 96, and asparagine 260 are each glycosylated (N-linked (GlcNAc...) asparagine). Residue asparagine 286 coordinates cortisol. Residues asparagine 330 and asparagine 369 are each glycosylated (N-linked (GlcNAc...) asparagine). Tryptophan 393 provides a ligand contact to cortisol.

Belongs to the serpin family. In terms of tissue distribution, expressed by the liver; secreted in plasma.

Its subcellular location is the secreted. Functionally, major transport protein for glucocorticoids and progestins in the blood of almost all vertebrate species. This chain is Corticosteroid-binding globulin (SERPINA6), found in Pongo abelii (Sumatran orangutan).